Reading from the N-terminus, the 148-residue chain is WAP four-disulfide core domain protein 12 (148 aa).

The first 23 residues, M1 to A23, serve as a signal peptide directing secretion. The region spanning G27–D74 is the WAP domain. Disulfide bonds link C34–C62, C41–C66, C49–C61, and C55–C70. The interval D74–S148 is disordered.

The protein localises to the secreted. Its function is as follows. Antibacterial protein. Putative acid-stable proteinase inhibitor. This Lemur catta (Ring-tailed lemur) protein is WAP four-disulfide core domain protein 12 (WFDC12).